The following is a 640-amino-acid chain: Chaperone protein DnaK (640 aa).

T198 carries the post-translational modification Phosphothreonine; by autocatalysis. Residues 600 to 640 (KTQGAGAEGSEQPHGEQEAGGAAKGETVVDADFEEVKDDKK) are disordered. Over residues 628–640 (VDADFEEVKDDKK) the composition is skewed to acidic residues.

This sequence belongs to the heat shock protein 70 family.

Functionally, acts as a chaperone. The protein is Chaperone protein DnaK of Geobacter sp. (strain M21).